A 129-amino-acid chain; its full sequence is Small ribosomal subunit protein uS8c (129 aa).

Belongs to the universal ribosomal protein uS8 family. In terms of assembly, part of the 30S ribosomal subunit.

The protein localises to the plastid. Its subcellular location is the chloroplast. Functionally, one of the primary rRNA binding proteins, it binds directly to 16S rRNA central domain where it helps coordinate assembly of the platform of the 30S subunit. This is Small ribosomal subunit protein uS8c (rps8) from Nephroselmis olivacea (Green alga).